The following is a 1151-amino-acid chain: Calcium-activated potassium channel subunit alpha-1 (1151 aa).

The interval 1-36 (MSSNIHANHLSLDASSSSSSSSSSSSSSSSSSSVHE) is disordered. At 1–59 (MSSNIHANHLSLDASSSSSSSSSSSSSSSSSSSVHEPKMDALIIPVTMEVPCDSRGQRM) the chain is on the extracellular side. Over residues 15 to 33 (SSSSSSSSSSSSSSSSSSS) the composition is skewed to low complexity. A helical membrane pass occupies residues 60-80 (WWAFLASSMVTFFGGLFIILL). Residues 81–151 (WRTLKYLWTV…MISAQTLTGR (71 aa)) lie on the Cytoplasmic side of the membrane. 3 S-palmitoyl cysteine lipidation sites follow: Cys-91, Cys-92, and Cys-94. A helical membrane pass occupies residues 152 to 172 (VLVVLVFALSIGALVIYFIDS). At 173–187 (SNPIESCQNFYKDFT) the chain is on the extracellular side. Residues 188–208 (LQIDMAFNVFFLLYFGLRFIA) traverse the membrane as a helical segment. Over 209 to 212 (ANDK) the chain is Cytoplasmic. Residues 213 to 233 (LWFWLEVNSVVDFFTVPPVFV) form a helical membrane-spanning segment. Topologically, residues 234–237 (SVYL) are extracellular. A helical; Voltage-sensor transmembrane segment spans residues 238–258 (NRSWLGLRFLRALRLIQFSEI). Topologically, residues 259 to 273 (LQFLNILKTSNSIKL) are cytoplasmic. A helical transmembrane segment spans residues 274-294 (VNLLSIFISTWLTAAGFIHLV). Residues 295 to 308 (ENSGDPWENFQNNQ) lie on the Extracellular side of the membrane. Residues 309–331 (ALTYWECVYLLMVTMSTVGYGDV) constitute an intramembrane region (pore-forming). Positions 325–328 (TVGY) match the Selectivity for potassium motif. Over 332 to 340 (YAKTTLGRL) the chain is Extracellular. The chain crosses the membrane as a helical span at residues 341–361 (FMVFFILGGLAMFASYVPEII). At 362-1151 (ELIGNRKKYG…KQKYVQEERL (790 aa)) the chain is on the cytoplasmic side. The region spanning 380–522 (RKHIVVCGHI…WNWKEGDDAI (143 aa)) is the RCK N-terminal 1 domain. 3 residues coordinate Mg(2+): Glu-412, Gln-435, and Glu-437. The tract at residues 529-549 (LGFIAQSCLAQGLSTMLANLF) is segment S7. A segment S8 region spans residues 586-606 (LSFPTVCELCFVKLKLLMIAI). Residues 650 to 654 (CKACH) form a heme-binding motif region. Residues 674-702 (EQPSTLSPKKKQRNGGMRNSPNSSPKLMR) are disordered. Phosphothreonine is present on Thr-678. Phosphoserine is present on residues Ser-680, Ser-693, and Ser-697. The interval 752 to 772 (VLSGHVVVCIFGDVSSALIGL) is segment S9. Positions 754–898 (SGHVVVCIFG…MDRSSPDNSP (145 aa)) constitute an RCK N-terminal 2 domain. Residue Thr-885 is modified to Phosphothreonine. Phosphoserine occurs at positions 893 and 897. The short motif at 918–940 (TELVNDTNVQFLDQDDDDDPDTE) is the Calcium bowl element. Ca(2+)-binding residues include Gln-927, Asp-930, Asp-933, and Asp-935. A segment S10 region spans residues 947–967 (FACGTAFAVSVLDSLMSATYF). Positions 1101–1126 (RASLSHSSHSSQSSSKKSSSVHSIPS) are enriched in low complexity. The interval 1101–1151 (RASLSHSSHSSQSSSKKSSSVHSIPSTANRQNRPKSRESRDKQKYVQEERL) is disordered. Basic and acidic residues predominate over residues 1135–1151 (KSRESRDKQKYVQEERL). A phosphoserine mark is found at Ser-1136 and Ser-1139.

Belongs to the potassium channel family. Calcium-activated (TC 1.A.1.3) subfamily. KCa1.1/KCNMA1 sub-subfamily. As to quaternary structure, homotetramer; which constitutes the calcium-activated potassium channel. Interacts with beta subunits KCNMB1, KCNMB2, KCNMB3 and KCNMB4. Interacts with gamma subunits LRRC26, LRRC38, LRRC52 and LRRC55. Beta and gamma subunits are accessory, and modulate its activity. Interacts with RAB11B. Post-translationally, phosphorylated. Phosphorylation by kinases such as PKA and/or PKG. In smooth muscles, phosphorylation affects its activity. Palmitoylation by ZDHHC22 and ZDHHC23 within the intracellular linker between the S0 and S1 transmembrane domains regulates localization to the plasma membrane. Depalmitoylated by LYPLA1 and LYPLAL1, leading to retard exit from the trans-Golgi network.

The protein resides in the cell membrane. The enzyme catalyses K(+)(in) = K(+)(out). Ethanol and carbon monoxide-bound heme increase channel activation. Heme inhibits channel activation. Potassium channel activated by both membrane depolarization or increase in cytosolic Ca(2+) that mediates export of K(+). It is also activated by the concentration of cytosolic Mg(2+). Its activation dampens the excitatory events that elevate the cytosolic Ca(2+) concentration and/or depolarize the cell membrane. It therefore contributes to repolarization of the membrane potential. Plays a key role in controlling excitability in a number of systems, such as regulation of the contraction of smooth muscle, the tuning of hair cells in the cochlea, regulation of transmitter release, and innate immunity. In smooth muscles, its activation by high level of Ca(2+), caused by ryanodine receptors in the sarcoplasmic reticulum, regulates the membrane potential. In cochlea cells, its number and kinetic properties partly determine the characteristic frequency of each hair cell and thereby helps to establish a tonotopic map. Kinetics of KCNMA1 channels are determined by alternative splicing, phosphorylation status and its combination with modulating beta subunits. Highly sensitive to both iberiotoxin (IbTx) and charybdotoxin (CTX). This Macaca mulatta (Rhesus macaque) protein is Calcium-activated potassium channel subunit alpha-1 (KCNMA1).